The chain runs to 375 residues: 2-oxoglutarate synthase subunit KorA (375 aa).

As to quaternary structure, heterotetramer of the KorA, KorB, KorC and KorD subunits.

The enzyme catalyses 2 oxidized [2Fe-2S]-[ferredoxin] + 2-oxoglutarate + CoA = succinyl-CoA + 2 reduced [2Fe-2S]-[ferredoxin] + CO2 + H(+). The chain is 2-oxoglutarate synthase subunit KorA (korA) from Methanothermobacter marburgensis (strain ATCC BAA-927 / DSM 2133 / JCM 14651 / NBRC 100331 / OCM 82 / Marburg) (Methanobacterium thermoautotrophicum).